Consider the following 6793-residue polypeptide: Replicase polyprotein 1ab (6793 aa).

The CoV Nsp1 globular domain maps to 2 to 109; sequence ASNHISLAFA…ELDLVFGRCG (108 aa). The CoV Nsp2 N-terminal domain maps to 112 to 368; it reads TIPVDQFMCG…TKFKFQLLAN (257 aa). Positions 396-785 constitute a CoV Nsp2 middle domain; the sequence is ILGLPWFVKK…LDTVTSFIKV (390 aa). Positions 776-897 constitute a CoV Nsp2 C-terminal domain; the sequence is LDTVTSFIKV…VASCFKKKGG (122 aa). Positions 898–993 constitute a Ubiquitin-like 1 domain; it reads GVVTISDEVQ…IMVSQWPLSS (96 aa). Positions 1069–1302 constitute a Peptidase C16 1 domain; that stretch reads AFIEDKPVVV…SCDVKPFLTY (234 aa). C1103 serves as the catalytic For PL1-PRO activity. A C4-type 1; degenerate zinc finger spans residues 1174–1205; the sequence is CGCGPGVRVYENAIFRFTPLKTAFPMGRCLIC. Catalysis depends on for PL1-PRO activity residues H1252 and D1265. In terms of domain architecture, Macro spans 1303–1467; it reads KNIEFYQGEL…FQTEQPVEPL (165 aa). The 56-residue stretch at 1638 to 1693 folds into the Ubiquitin-like 2 domain; sequence AKPVQVVVTQDQRSFHTVELSTSQTYGQQLGDCVVEDKKVTNLKPVSKDKVVSVVP. Residues 1699–1965 form the Peptidase C16 2 domain; it reads KHYGFVDAGI…FLDTMNVASE (267 aa). The active-site For PL2-PRO activity is C1737. The C4-type 2; degenerate zinc-finger motif lies at 1816 to 1849; it reads TTCDGTCSTKRVVSTPVVNASVLKVGLDDGNCVH. Catalysis depends on for PL2-PRO activity residues H1902 and D1915. A run of 2 helical transmembrane segments spans residues 1973–1993 and 2036–2056; these read FVSR…AICF and YIKV…LMFM. Residues 1973 to 2184 form an HD1 region; sequence FVSRNIIVLI…MGNIIVVAFI (212 aa). One can recognise a 3Ecto domain in the interval 2052-2116; the sequence is ALMFMFIRFT…TRVIWQHLKD (65 aa). Cystine bridges form between C2068-C2094 and C2086-C2091. A run of 3 helical transmembrane segments spans residues 2119–2139, 2141–2161, and 2164–2184; these read IGNI…GFFV, IGIT…LGYQ, and VWLL…VAFI. A Y1 region spans residues 2190-2280; it reads LFLKHVLFGC…VTKLNVIPTG (91 aa). Residues 2190 to 2530 enclose the CoV Nsp3 Y domain; it reads LFLKHVLFGC…PTISVANKKG (341 aa). Zn(2+)-binding residues include H2194, C2199, C2204, C2207, C2240, H2243, C2247, and C2250. The interval 2194 to 2207 is ZF1; it reads HVLFGCDKPSCIAC. The ZF2 stretch occupies residues 2240-2250; sequence CKKHNFFCVDC. The Y2 stretch occupies residues 2281-2370; that stretch reads PATIIIDKVE…LVDSALLASL (90 aa). The segment at 2281–2530 is coV-Y; it reads PATIIIDKVE…PTISVANKKG (250 aa). Positions 2371 to 2428 are Y3; the sequence is NVDFSANLHKAFVEVLSNSFGKDLSNCSNMNECRESLGLSDVPEEEFSAAVSEAHRYD. The tract at residues 2429 to 2530 is Y4; the sequence is VLISDVSFNN…PTISVANKKG (102 aa). 7 helical membrane passes run 2543 to 2563, 2634 to 2654, 2669 to 2689, 2769 to 2789, 2802 to 2822, 2829 to 2849, and 2878 to 2898; these read FFWH…LLDF, VPAG…TIFG, DSCI…RNVY, GSDY…IGMF, ILLN…FTKF, MSFG…SYVV, and VGFA…AYLI. The segment at 2543 to 2898 is HD2; it reads FFWHLCVLIV…PWWVVLAYLI (356 aa). The Nsp4C domain maps to 2917 to 3012; it reads LFEGDKFVGS…PTVSYNSTLQ (96 aa). Positions 3013–3314 constitute a Peptidase C30 domain; the sequence is AGLRKMAQPS…VKQMYGVTLQ (302 aa). Catalysis depends on for 3CL-PRO activity residues H3053 and C3156. Helical transmembrane passes span 3351–3371, 3376–3396, 3414–3434, 3443–3463, 3466–3486, 3488–3507, and 3511–3531; these read GYIT…MLLV, LFLQ…NIFK, FGGF…VMGL, PNKI…YYYS, VLGL…IGTA, YKLA…FDAI, and VFLY…LYWI. Residues 3351–3531 form an HD3 region; the sequence is GYITPVFLAI…CVYYGSLYWI (181 aa). Positions 3591–3673 constitute a RdRp Nsp7 cofactor domain; sequence SKLTDLKCTN…SYFNDSSVLQ (83 aa). Residues 3674 to 3868 form the RdRp Nsp8 cofactor domain; the sequence is SVAATYVNLP…LNCERIIKLQ (195 aa). The region spanning 3869–3976 is the Nsp9 ssRNA-binding domain; sequence NNEIIPSKIK…GFIGATVRLQ (108 aa). An ExoN/MTase coactivator domain is found at 3977–4115; sequence AGKQTEQATN…DRAVIQSVDS (139 aa). Residues C4050, C4053, H4059, C4066, C4092, C4095, C4103, and C4105 each contribute to the Zn(2+) site. Zinc fingers lie at residues 4050 to 4066 and 4092 to 4105; these read CLYC…DGFC and CKVC…GCTC. A NiRAN domain is found at 4117–4366; sequence YLNRVRGSSA…ASECFIKSDI (250 aa). Positions 4372 to 4470 constitute a Nsp12 Interface domain; sequence RTFDLLAYDF…WNKDLNLHSS (99 aa). Zn(2+) is bound by residues H4401, C4407, C4412, C4416, and C4593. Residues 4471-5038 enclose the Nsp12 RNA-dependent RNA polymerase domain; that stretch reads RLTINELLQF…SMYEQSSVLQ (568 aa). Residues 4473–4687 form a rdRp Fingers N-ter region; it reads TINELLQFCA…HQKHLKSIVN (215 aa). The rdRp Palm N-ter stretch occupies residues 4688 to 4726; the sequence is TRGASVVIGTTKFYGGWDNMLKTLIKDVENPHLMGWDYP. Residues 4718-4880 enclose the RdRp catalytic domain; the sequence is PHLMGWDYPK…CYNSEYAALG (163 aa). The tract at residues 4727–4785 is rdRp Fingers C-ter; sequence KCDRALPNMIRMISAMILGSKHVNCCSSSDRYYRLCNELAQVLTEMVYSNGGFYVKPGG. Zn(2+)-binding residues include H4748, C4751, and C4752. Positions 4786–4921 are rdRp Palm C-ter; the sequence is TTSGDATTAY…NKGPHEFCSQ (136 aa). Catalysis depends on residues S4865, D4866, and D4867. A rdRp Thumb region spans residues 4922-5038; sequence HTMQIVDKDG…SMYEQSSVLQ (117 aa). One can recognise a CV ZBD domain in the interval 5039-5151; that stretch reads SAGLCVVCSS…DDFNTLATSD (113 aa). C5043, C5046, C5054, C5057, C5064, C5067, H5071, H5077, C5088, C5093, C5110, and H5113 together coordinate Zn(2+). A (+)RNA virus helicase ATP-binding domain is found at 5296–5477; it reads NIHEDYSNLI…MCVLKPDIFL (182 aa). Position 5321-5328 (5321-5328) interacts with ATP; that stretch reads GPPGSGKS. In terms of domain architecture, (+)RNA virus helicase C-terminal spans 5478–5647; it reads HKCYRCPAEI…DGCGLFKDCY (170 aa). An ExoN domain is found at 5707-5921; it reads LFCTRDFAMR…RCLAIHDCFV (215 aa). Residues D5725, E5727, and E5826 contribute to the active site. Residues C5842, C5844, C5860, H5863, H5891, C5895, and H5898 each coordinate Zn(2+). Catalysis depends on residues H5902 and D5907. Position 5913 (C5913) interacts with Zn(2+). Positions 5930 to 6151 constitute an N7-MTase domain; the sequence is YPFIANEQAI…NLWQTFKNSN (222 aa). 5965–5971 contacts S-adenosyl-L-methionine; the sequence is DVGNPKG. A gpppA-binding region spans residues 6042–6056; sequence CNGGSLYVNNHAFHT. Zn(2+)-binding residues include C6080, C6097, C6108, and H6111. A Nsp15 N-terminal oligomerization domain is found at 6154–6214; the sequence is GLENIAYNVV…NVAFELYAKR (61 aa). Residues 6215 to 6332 enclose the AV-Nsp11N/CoV-Nsp15M domain; sequence KVGLTPPLTI…IYTRKDGAFV (118 aa). A NendoU domain is found at 6349–6489; the sequence is QPRSNMEEDF…KDHKVQTFYP (141 aa). Catalysis depends on residues H6379, H6394, K6435, K6537, D6621, K6661, and E6694. One can recognise a Nidovirus-type SAM-dependent 2'-O-MTase domain in the interval 6493-6789; the sequence is SAEWKCGYSM…VVCGFSNHLV (297 aa).

Belongs to the coronaviruses polyprotein 1ab family. 3CL-PRO exists as monomer and homodimer. Eight copies of nsp7 and eight copies of nsp8 assemble to form a heterohexadecamer. Nsp9 is a dimer. Nsp10 forms a dodecamer. It depends on Mn(2+) as a cofactor. In terms of processing, specific enzymatic cleavages in vivo by its own proteases yield mature proteins. 3CL-PRO and PL-PRO proteinases are autocatalytically processed.

It localises to the host membrane. It is found in the host cytoplasm. The protein resides in the host perinuclear region. The protein localises to the host endoplasmic reticulum-Golgi intermediate compartment. The catalysed reaction is Thiol-dependent hydrolysis of ester, thioester, amide, peptide and isopeptide bonds formed by the C-terminal Gly of ubiquitin (a 76-residue protein attached to proteins as an intracellular targeting signal).. The enzyme catalyses RNA(n) + a ribonucleoside 5'-triphosphate = RNA(n+1) + diphosphate. It carries out the reaction ATP + H2O = ADP + phosphate + H(+). It catalyses the reaction a 5'-end diphospho-ribonucleoside in mRNA + GTP + H(+) = a 5'-end (5'-triphosphoguanosine)-ribonucleoside in mRNA + diphosphate. The catalysed reaction is a 5'-end (N(7)-methyl 5'-triphosphoguanosine)-ribonucleoside in mRNA + S-adenosyl-L-methionine = a 5'-end (N(7)-methyl 5'-triphosphoguanosine)-(2'-O-methyl-ribonucleoside) in mRNA + S-adenosyl-L-homocysteine + H(+). The enzyme catalyses uridylyl-uridylyl-ribonucleotide-RNA = a 3'-end uridylyl-2',3'-cyclophospho-uridine-RNA + a 5'-end dephospho-ribonucleoside-RNA. In terms of biological role, the replicase polyprotein of coronaviruses is a multifunctional protein: it contains the activities necessary for the transcription of negative stranded RNA, leader RNA, subgenomic mRNAs and progeny virion RNA as well as proteinases responsible for the cleavage of the polyprotein into functional products. Its function is as follows. The papain-like proteinase 1 (PLP1) and papain-like proteinase 2 (PLP2) are responsible for the cleavages located at the N-terminus of the replicase polyprotein. In addition, PLP2 possesses a deubiquitinating/deISGylating activity and processes both 'Lys-48'- and 'Lys-63'-linked polyubiquitin chains from cellular substrates. PLP2 also antagonizes innate immune induction of type I interferon by blocking the nuclear translocation of host IRF-3. Responsible for the majority of cleavages as it cleaves the C-terminus of replicase polyprotein at 11 sites. Recognizes substrates containing the core sequence [ILMVF]-Q-|-[SGACN]. Inhibited by the substrate-analog Cbz-Val-Asn-Ser-Thr-Leu-Gln-CMK. Also contains an ADP-ribose-1''-phosphate (ADRP)-binding function. Functionally, the helicase which contains a zinc finger structure displays RNA and DNA duplex-unwinding activities with 5' to 3' polarity. ATPase activity is strongly stimulated by poly(U), poly(dT), poly(C), poly(dA), but not by poly(G). In terms of biological role, the exoribonuclease acts on both ssRNA and dsRNA in a 3' to 5' direction. Its function is as follows. Nsp7-nsp8 hexadecamer may possibly confer processivity to the polymerase, maybe by binding to dsRNA or by producing primers utilized by the latter. Forms a primer, NSP9-pU, which is utilized by the polymerase for the initiation of RNA chains. Interacts with ribosome signal recognition particle RNA (SRP). Together with NSP8, suppress protein integration into the cell membrane, thereby disrupting host immune defenses. Functionally, RNA-directed RNA polymerase that catalyzes the transcription of viral genomic and subgenomic RNAs. Acts in complex with nsp7 and nsp8 to transcribe both the minus and positive strands of genomic RNA. The kinase-like NiRAN domain of NSP12 attaches one or more nucleotides to the amino terminus of NSP9, forming a covalent RNA-protein intermediate that serves as transcription/replication primer. Subgenomic RNAs (sgRNAs) are formed by discontinuous transcription: The polymerase has the ability to pause at transcription-regulating sequences (TRS) and jump to the leader TRS, resulting in a major deletion. This creates a series of subgenomic RNAs that are replicated, transcribed and translated. In addition, Nsp12 is a subunit of the viral RNA capping enzyme that catalyzes the RNA guanylyltransferase reaction for genomic and sub-genomic RNAs. Subsequently, the NiRAN domain transfers RNA to GDP, and forms the core cap structure GpppA-RNA. In terms of biological role, plays a role in viral transcription/replication and prevents the simultaneous activation of host cell dsRNA sensors, such as MDA5/IFIH1, OAS, and PKR. Acts by degrading the 5'-polyuridines generated during replication of the poly(A) region of viral genomic and subgenomic RNAs. Catalyzes a two-step reaction in which a 2'3'-cyclic phosphate (2'3'-cP) is first generated by 2'-O transesterification, which is then hydrolyzed to a 3'-phosphate (3'-P). If not degraded, poly(U) RNA would hybridize with poly(A) RNA tails and activate host dsRNA sensors. The protein is Replicase polyprotein 1ab (rep) of Bat coronavirus 512/2005 (BtCoV).